Here is a 341-residue protein sequence, read N- to C-terminus: MSINIEQAIIHEISQDSQGQLRCRLRPQPLLNSQAVEAMLEELHQTYSGKAGKGFGFFGTHGEDGEANPAFADGLSQYRSGDLGFVEFTGVASKLLQEELAKYDFSQGGFLLMSCYTSMTSDYLFVALLSAKSSMTVLDDMELSQNNHLDLNNIQLAARIDLTEWQADKDSRKYISFIRGRAGRKVADFFLDFMGCVEGVNIKAQNKTLMHAVEDFVSGSELTKDERQQCRDKVFDYCSERAEVGADIELKDLADELADSGMDSFYDFASSGTYELDEEFPADKASLRQLKKFSGTGGGVTLSFDGGHLGERVIYDPISDTLLIKGVPANLKDQLDRRLKG.

This sequence belongs to the YejK family.

The protein localises to the cytoplasm. Its subcellular location is the nucleoid. The sequence is that of Nucleoid-associated protein Sden_2335 from Shewanella denitrificans (strain OS217 / ATCC BAA-1090 / DSM 15013).